The sequence spans 483 residues: Fructose-like PTS system EIIBC component (483 aa).

The PTS EIIB type-2 domain occupies 1-105; the sequence is MESSLRIVAI…IDQIFSELPT (105 aa). Cysteine 13 functions as the Phosphocysteine intermediate; for EIIB activity in the catalytic mechanism. Position 13 is a phosphocysteine; by EIIA (cysteine 13). The PTS EIIC type-2 domain maps to 128–475; that stretch reads VMSHLMAGVS…LWLRRKAKAA (348 aa). Transmembrane regions (helical) follow at residues 132-152, 180-200, 204-224, 227-247, 264-284, 303-323, 344-364, 380-400, 402-422, and 442-462; these read LMAGVSAALPFVIGGGILVAL, IGYLGFTFMIPIMGAYIASSI, PAFAPAFLVCYLANDKALLGT, GAGFLGAVVLGLAIGYFVFWF, LIPFVTLLVFGVLTYYVIGPV, MKFAAAFLVGAMLAFDMGGPI, AIVGVVALMPPVAAGLATFIA, IVVGATVATEPAIPYALAAPL, MITANTLAGGITGVLVIAFGI, and VGSFYLVLAIGLALNISFIIV.

Its subcellular location is the cell inner membrane. The enzyme catalyses D-fructose(out) + N(pros)-phospho-L-histidyl-[protein] = D-fructose 1-phosphate(in) + L-histidyl-[protein]. In terms of biological role, the phosphoenolpyruvate-dependent sugar phosphotransferase system (sugar PTS), a major carbohydrate active transport system, catalyzes the phosphorylation of incoming sugar substrates concomitantly with their translocation across the cell membrane. The enzyme II FrvAB PTS system is involved in fructose transport. The chain is Fructose-like PTS system EIIBC component from Escherichia coli (strain K12).